Consider the following 602-residue polypeptide: Proline--tRNA ligase (602 aa).

This sequence belongs to the class-II aminoacyl-tRNA synthetase family. ProS type 1 subfamily. As to quaternary structure, homodimer.

The protein resides in the cytoplasm. It carries out the reaction tRNA(Pro) + L-proline + ATP = L-prolyl-tRNA(Pro) + AMP + diphosphate. In terms of biological role, catalyzes the attachment of proline to tRNA(Pro) in a two-step reaction: proline is first activated by ATP to form Pro-AMP and then transferred to the acceptor end of tRNA(Pro). As ProRS can inadvertently accommodate and process non-cognate amino acids such as alanine and cysteine, to avoid such errors it has two additional distinct editing activities against alanine. One activity is designated as 'pretransfer' editing and involves the tRNA(Pro)-independent hydrolysis of activated Ala-AMP. The other activity is designated 'posttransfer' editing and involves deacylation of mischarged Ala-tRNA(Pro). The misacylated Cys-tRNA(Pro) is not edited by ProRS. In Thermosynechococcus vestitus (strain NIES-2133 / IAM M-273 / BP-1), this protein is Proline--tRNA ligase.